The sequence spans 177 residues: ATP synthase subunit delta (177 aa).

This sequence belongs to the ATPase delta chain family. F-type ATPases have 2 components, F(1) - the catalytic core - and F(0) - the membrane proton channel. F(1) has five subunits: alpha(3), beta(3), gamma(1), delta(1), epsilon(1). F(0) has three main subunits: a(1), b(2) and c(10-14). The alpha and beta chains form an alternating ring which encloses part of the gamma chain. F(1) is attached to F(0) by a central stalk formed by the gamma and epsilon chains, while a peripheral stalk is formed by the delta and b chains.

Its subcellular location is the cell inner membrane. F(1)F(0) ATP synthase produces ATP from ADP in the presence of a proton or sodium gradient. F-type ATPases consist of two structural domains, F(1) containing the extramembraneous catalytic core and F(0) containing the membrane proton channel, linked together by a central stalk and a peripheral stalk. During catalysis, ATP synthesis in the catalytic domain of F(1) is coupled via a rotary mechanism of the central stalk subunits to proton translocation. In terms of biological role, this protein is part of the stalk that links CF(0) to CF(1). It either transmits conformational changes from CF(0) to CF(1) or is implicated in proton conduction. The polypeptide is ATP synthase subunit delta (Serratia proteamaculans (strain 568)).